Consider the following 188-residue polypeptide: Ribosome-recycling factor (188 aa).

Belongs to the RRF family.

Its subcellular location is the cytoplasm. Its function is as follows. Responsible for the release of ribosomes from messenger RNA at the termination of protein biosynthesis. May increase the efficiency of translation by recycling ribosomes from one round of translation to another. The polypeptide is Ribosome-recycling factor (Cereibacter sphaeroides (strain ATCC 17023 / DSM 158 / JCM 6121 / CCUG 31486 / LMG 2827 / NBRC 12203 / NCIMB 8253 / ATH 2.4.1.) (Rhodobacter sphaeroides)).